The primary structure comprises 408 residues: ATP phosphoribosyltransferase regulatory subunit (408 aa).

It belongs to the class-II aminoacyl-tRNA synthetase family. HisZ subfamily. Heteromultimer composed of HisG and HisZ subunits.

The protein localises to the cytoplasm. It functions in the pathway amino-acid biosynthesis; L-histidine biosynthesis; L-histidine from 5-phospho-alpha-D-ribose 1-diphosphate: step 1/9. Its function is as follows. Required for the first step of histidine biosynthesis. May allow the feedback regulation of ATP phosphoribosyltransferase activity by histidine. The polypeptide is ATP phosphoribosyltransferase regulatory subunit (Thermosynechococcus vestitus (strain NIES-2133 / IAM M-273 / BP-1)).